A 375-amino-acid chain; its full sequence is Filamin-binding LIM protein 1 (375 aa).

The tract at residues 1–70 (MASKPEKRVA…SPWTPPGRAA (70 aa)) is filamin-binding. Disordered regions lie at residues 43–119 (WEAP…PSEE) and 137–176 (HLSP…AERV). Composition is skewed to pro residues over residues 104 to 114 (FPPPPPPPPVL) and 140 to 149 (PPLPPPPPQA). Residues 150–159 (PAERPSVQPS) are compositionally biased toward low complexity. 3 LIM zinc-binding domains span residues 183 to 244 (DICA…TLER), 245 to 302 (CGKC…RKFA), and 303 to 372 (PVCS…RSAA). The tract at residues 278 to 375 (IGDESFALGS…HVKRSAAGCC (98 aa)) is FERMT2-binding.

Interacts with FERMT2, FLNA, FLNB and FLNC. Interacts with NKX2-5.

It is found in the cell junction. The protein resides in the focal adhesion. It localises to the cytoplasm. Its subcellular location is the cytoskeleton. The protein localises to the stress fiber. Serves as an anchoring site for cell-ECM adhesion proteins and filamin-containing actin filaments. Is implicated in cell shape modulation (spreading) and motility. May participate in the regulation of filamin-mediated cross-linking and stabilization of actin filaments. May also regulate the assembly of filamin-containing signaling complexes that control actin assembly. Promotes dissociation of FLNA from ITGB3 and ITGB7. Promotes activation of integrins and regulates integrin-mediated cell-cell adhesion. This Pongo abelii (Sumatran orangutan) protein is Filamin-binding LIM protein 1 (FBLIM1).